We begin with the raw amino-acid sequence, 257 residues long: UPF0246 protein CV_1250 (257 aa).

The protein belongs to the UPF0246 family.

This is UPF0246 protein CV_1250 from Chromobacterium violaceum (strain ATCC 12472 / DSM 30191 / JCM 1249 / CCUG 213 / NBRC 12614 / NCIMB 9131 / NCTC 9757 / MK).